We begin with the raw amino-acid sequence, 600 residues long: Aspartate--tRNA(Asp/Asn) ligase (600 aa).

L-aspartate is bound at residue E176. Residues 200–203 (QQFK) are aspartate. L-aspartate-binding residues include R222 and H452. Residue 222-224 (RDE) participates in ATP binding. E490 serves as a coordination point for ATP. R497 contributes to the L-aspartate binding site. Residue 542 to 545 (GIDR) coordinates ATP.

The protein belongs to the class-II aminoacyl-tRNA synthetase family. Type 1 subfamily. As to quaternary structure, homodimer.

It localises to the cytoplasm. The catalysed reaction is tRNA(Asx) + L-aspartate + ATP = L-aspartyl-tRNA(Asx) + AMP + diphosphate. In terms of biological role, aspartyl-tRNA synthetase with relaxed tRNA specificity since it is able to aspartylate not only its cognate tRNA(Asp) but also tRNA(Asn). Reaction proceeds in two steps: L-aspartate is first activated by ATP to form Asp-AMP and then transferred to the acceptor end of tRNA(Asp/Asn). The protein is Aspartate--tRNA(Asp/Asn) ligase of Rickettsia felis (strain ATCC VR-1525 / URRWXCal2) (Rickettsia azadi).